A 63-amino-acid chain; its full sequence is Adipokinetic prohormone type 1 (63 aa).

Positions 1-22 (MVQRCALVVLLVVAVAAALCSA) are cleaved as a signal peptide. Q23 bears the Pyrrolidone carboxylic acid mark. A Threonine amide modification is found at T32.

It belongs to the AKH/HRTH/RPCH family.

The protein resides in the secreted. Its function is as follows. This hormone, released from cells in the corpora cardiaca, causes release of diglycerides from the fat body and stimulation of muscles to use these diglycerides as an energy source during energy-demanding processes. This chain is Adipokinetic prohormone type 1, found in Locusta migratoria (Migratory locust).